The chain runs to 501 residues: Ribose import ATP-binding protein RbsA (501 aa).

ABC transporter domains follow at residues 5-241 and 252-495; these read LQLK…VGRK and APGD…VGKL. 37–44 lines the ATP pocket; that stretch reads GENGAGKS.

The protein belongs to the ABC transporter superfamily. Ribose importer (TC 3.A.1.2.1) family. The complex is composed of an ATP-binding protein (RbsA), two transmembrane proteins (RbsC) and a solute-binding protein (RbsB).

It is found in the cell inner membrane. The catalysed reaction is D-ribose(out) + ATP + H2O = D-ribose(in) + ADP + phosphate + H(+). Functionally, part of the ABC transporter complex RbsABC involved in ribose import. Responsible for energy coupling to the transport system. The chain is Ribose import ATP-binding protein RbsA from Shigella sonnei (strain Ss046).